A 263-amino-acid polypeptide reads, in one-letter code: Small ribosomal subunit protein uS2 (263 aa).

S2 is subject to N-acetylserine. Positions N213–T223 are enriched in low complexity. Residues N213 to D245 form a disordered region. Residues E224–D245 are compositionally biased toward acidic residues.

The protein belongs to the universal ribosomal protein uS2 family. In terms of assembly, component of the small ribosomal subunit. Mature ribosomes consist of a small (40S) and a large (60S) subunit. The 40S subunit contains about 33 different proteins and 1 molecule of RNA (18S). The 60S subunit contains about 49 different proteins and 3 molecules of RNA (25S, 5.8S and 5S). Interacts with RPS21.

It is found in the cytoplasm. Its function is as follows. Required for the assembly and/or stability of the 40S ribosomal subunit. Required for the processing of the 20S rRNA-precursor to mature 18S rRNA in a late step of the maturation of 40S ribosomal subunits. The chain is Small ribosomal subunit protein uS2 from Clavispora lusitaniae (strain ATCC 42720) (Yeast).